We begin with the raw amino-acid sequence, 352 residues long: Phosphoribosylformylglycinamidine cyclo-ligase (352 aa).

It belongs to the AIR synthase family.

Its subcellular location is the cytoplasm. The catalysed reaction is 2-formamido-N(1)-(5-O-phospho-beta-D-ribosyl)acetamidine + ATP = 5-amino-1-(5-phospho-beta-D-ribosyl)imidazole + ADP + phosphate + H(+). The protein operates within purine metabolism; IMP biosynthesis via de novo pathway; 5-amino-1-(5-phospho-D-ribosyl)imidazole from N(2)-formyl-N(1)-(5-phospho-D-ribosyl)glycinamide: step 2/2. This Pseudomonas entomophila (strain L48) protein is Phosphoribosylformylglycinamidine cyclo-ligase.